Reading from the N-terminus, the 419-residue chain is Copalyl diphosphate synthase 2, chloroplastic (419 aa).

Lys-82 provides a ligand contact to substrate.

It belongs to the terpene synthase family. Tpsc subfamily. It depends on Mg(2+) as a cofactor. In terms of tissue distribution, ubiquitous expression in roots, stems, leaves and flowers.

Its subcellular location is the plastid. The protein resides in the chloroplast. It catalyses the reaction (2E,6E,10E)-geranylgeranyl diphosphate = (+)-copalyl diphosphate. It functions in the pathway secondary metabolite biosynthesis; terpenoid biosynthesis. Its function is as follows. Involved in the biosynthesis of ent-kaurene diterpenoids natural products such as oridonin, miltiradiene, eriocalyxin B and nezukol, known to exhibit antitumor, anti-inflammatory and antibacterial activities. Catalyzes the conversion of (2E,6E,10E)-geranylgeranyl diphosphate (GGPP) to (+)-copalyl diphosphate ((+)-CPP). The polypeptide is Copalyl diphosphate synthase 2, chloroplastic (Isodon rubescens (Rabdosia rubescens)).